The sequence spans 187 residues: MLEHIEKELLEHQKTFEKVWEELRFHIYTASIICIEALKNQKKIMLCGNGGSAADAQHIAAELVGRFKKERRSLPAIALSVDTSALTAIGNDYGFELVFARQVEGLAQKGDVLIGISTSGESENVLRAMEEAKKRGCKTIGLLGKDGGRIKDLCDAAIVVPSSQTPRIQEMHIMIGHILCSLIDESF.

The region spanning 34 to 187 (CIEALKNQKK…ILCSLIDESF (154 aa)) is the SIS domain. Position 49–51 (49–51 (NGG)) interacts with substrate. Zn(2+) contacts are provided by histidine 58 and glutamate 62. Residues glutamate 62, 91–92 (ND), 117–119 (STS), serine 122, and glutamine 169 contribute to the substrate site. Residues glutamine 169 and histidine 177 each contribute to the Zn(2+) site.

The protein belongs to the SIS family. GmhA subfamily. Homotetramer. Zn(2+) serves as cofactor.

The protein localises to the cytoplasm. The catalysed reaction is 2 D-sedoheptulose 7-phosphate = D-glycero-alpha-D-manno-heptose 7-phosphate + D-glycero-beta-D-manno-heptose 7-phosphate. The protein operates within carbohydrate biosynthesis; D-glycero-D-manno-heptose 7-phosphate biosynthesis; D-glycero-alpha-D-manno-heptose 7-phosphate and D-glycero-beta-D-manno-heptose 7-phosphate from sedoheptulose 7-phosphate: step 1/1. In terms of biological role, catalyzes the isomerization of sedoheptulose 7-phosphate in D-glycero-D-manno-heptose 7-phosphate. This Nitratiruptor sp. (strain SB155-2) protein is Phosphoheptose isomerase.